A 213-amino-acid chain; its full sequence is MDRSAQRIDFTQPADVVAPLLLGAVLRHGGVAIELTEVEAYLGTADEASHAFNGPTPRCEVMFGPPQHLYVYASYGIHRAGNLVCSPDGEAGGVLLRAGKIIEGLDIARARRGSKPADEALARGPGNLGAALGLNLDLNGSAVDQVFSGAGDSSPTSAPFTLTPRTAIPEITRGKRIGISKNADALLRFWVPGDRSVSSPRGRQLGTPLRASS.

The protein belongs to the DNA glycosylase MPG family.

The polypeptide is Putative 3-methyladenine DNA glycosylase (Corynebacterium jeikeium (strain K411)).